We begin with the raw amino-acid sequence, 228 residues long: Cytochrome c oxidase subunit 2 (228 aa).

Over 1-26 (MATWNNLNLQNGASPLMEQIIFFHDH) the chain is Mitochondrial intermembrane. The helical transmembrane segment at 27–48 (TLIILIMITILVGYLMINLFFN) threads the bilayer. At 49 to 62 (KYINRFLLEGQMIE) the chain is on the mitochondrial matrix side. A helical membrane pass occupies residues 63–82 (LIWTILPAITLIFIALPSLR). Over 83–228 (LLYLLDELNN…FIKWINNYSS (146 aa)) the chain is Mitochondrial intermembrane. H161, C196, E198, C200, H204, and M207 together coordinate Cu cation. E198 is a binding site for Mg(2+).

It belongs to the cytochrome c oxidase subunit 2 family. As to quaternary structure, component of the cytochrome c oxidase (complex IV, CIV), a multisubunit enzyme composed of a catalytic core of 3 subunits and several supernumerary subunits. The complex exists as a monomer or a dimer and forms supercomplexes (SCs) in the inner mitochondrial membrane with ubiquinol-cytochrome c oxidoreductase (cytochrome b-c1 complex, complex III, CIII). It depends on Cu cation as a cofactor.

Its subcellular location is the mitochondrion inner membrane. The enzyme catalyses 4 Fe(II)-[cytochrome c] + O2 + 8 H(+)(in) = 4 Fe(III)-[cytochrome c] + 2 H2O + 4 H(+)(out). In terms of biological role, component of the cytochrome c oxidase, the last enzyme in the mitochondrial electron transport chain which drives oxidative phosphorylation. The respiratory chain contains 3 multisubunit complexes succinate dehydrogenase (complex II, CII), ubiquinol-cytochrome c oxidoreductase (cytochrome b-c1 complex, complex III, CIII) and cytochrome c oxidase (complex IV, CIV), that cooperate to transfer electrons derived from NADH and succinate to molecular oxygen, creating an electrochemical gradient over the inner membrane that drives transmembrane transport and the ATP synthase. Cytochrome c oxidase is the component of the respiratory chain that catalyzes the reduction of oxygen to water. Electrons originating from reduced cytochrome c in the intermembrane space (IMS) are transferred via the dinuclear copper A center (CU(A)) of subunit 2 and heme A of subunit 1 to the active site in subunit 1, a binuclear center (BNC) formed by heme A3 and copper B (CU(B)). The BNC reduces molecular oxygen to 2 water molecules using 4 electrons from cytochrome c in the IMS and 4 protons from the mitochondrial matrix. This is Cytochrome c oxidase subunit 2 (COII) from Yponomeuta malinellus (European small ermine moth).